A 98-amino-acid chain; its full sequence is Signal peptidase complex subunit 1 (98 aa).

Residues 1–18 lie on the Cytoplasmic side of the membrane; it reads MLDIQTHMDFAGQGKAER. The helical transmembrane segment at 19-38 threads the bilayer; that stretch reads WSRFIITFFGIVGLVYGAFV. The Lumenal segment spans residues 39 to 42; the sequence is QQFS. The chain crosses the membrane as a helical span at residues 43 to 65; that stretch reads QTVYILGAGFVLSSLITIPPWPL. Residues 66-98 are Cytoplasmic-facing; the sequence is YRRNALKWQKPIDTDAKSSSSESGDEGKKKKKQ. The segment at 78–98 is disordered; the sequence is DTDAKSSSSESGDEGKKKKKQ. Phosphoserine is present on residues Ser84, Ser85, Ser86, and Ser88.

Belongs to the SPCS1 family. In terms of assembly, component of the signal peptidase complex (SPC) composed of a catalytic subunit twr/SEC11 and three accessory subunits Spase12/SPCS1, Spase25/SPCS2 and Spase22-23/SPCS3. The complex induces a local thinning of the ER membrane which is used to measure the length of the signal peptide (SP) h-region of protein substrates. This ensures the selectivity of the complex towards h-regions shorter than 18-20 amino acids.

It is found in the endoplasmic reticulum membrane. Component of the signal peptidase complex (SPC) which catalyzes the cleavage of N-terminal signal sequences from nascent proteins as they are translocated into the lumen of the endoplasmic reticulum. Dispensable for SPC enzymatic activity. In terms of biological role, (Microbial infection) Plays an important role in infection by flaviviruses such as West Nile virus and Dengue virus type 2. In Drosophila melanogaster (Fruit fly), this protein is Signal peptidase complex subunit 1 (Spase12).